We begin with the raw amino-acid sequence, 177 residues long: T-cell receptor beta chain C region (177 aa).

Residues 1–150 (EDLANVSAPQ…GVLSATVLYE (150 aa)) are c region. N-linked (GlcNAc...) asparagine glycosylation is found at asparagine 5 and asparagine 22. A disulfide bridge links cysteine 31 with cysteine 96. The helical transmembrane segment at 146–168 (TVLYEILLGKATLYAVLVSALVL) threads the bilayer. Residues 169–177 (MAMVKRKDS) are Cytoplasmic-facing.

The protein resides in the membrane. The chain is T-cell receptor beta chain C region from Oryctolagus cuniculus (Rabbit).